Consider the following 123-residue polypeptide: MSFTTSAQPRKQRRSLYKAPLHLRRKLFNAKLSPELAKKLGVKRLPVRRGDTVLILRGDFKGVTGKVVKVDLKRVRIYVEGATRTNSRGQTVYYPIHPSKVMIVDVDLSDKARQKIIERRKKK.

It belongs to the universal ribosomal protein uL24 family. In terms of assembly, part of the 50S ribosomal subunit.

Functionally, one of two assembly initiator proteins, it binds directly to the 5'-end of the 23S rRNA, where it nucleates assembly of the 50S subunit. Located at the polypeptide exit tunnel on the outside of the subunit. This is Large ribosomal subunit protein uL24 from Pyrobaculum aerophilum (strain ATCC 51768 / DSM 7523 / JCM 9630 / CIP 104966 / NBRC 100827 / IM2).